A 187-amino-acid chain; its full sequence is Benzene 1,2-dioxygenase subunit beta (187 aa).

The protein belongs to the bacterial ring-hydroxylating dioxygenase beta subunit family. This dioxygenase system consists of four proteins: the two subunits of the hydroxylase component (BedC1 and BedC2), a ferredoxin (BedB) and a ferredoxin reductase (BedA).

The catalysed reaction is benzene + NADH + O2 + H(+) = cis-1,2-dihydrobenzene-1,2-diol + NAD(+). It functions in the pathway aromatic compound metabolism; benzene degradation; catechol from benzene: step 1/2. Its function is as follows. The beta subunit may be responsible for the substrate specificity of the enzyme. The chain is Benzene 1,2-dioxygenase subunit beta (bedC2) from Pseudomonas putida (Arthrobacter siderocapsulatus).